Consider the following 256-residue polypeptide: Protein FixA (256 aa).

Belongs to the ETF beta-subunit/FixA family. In terms of assembly, heterodimer of FixA and FixB.

The protein operates within amine and polyamine metabolism; carnitine metabolism. Functionally, required for anaerobic carnitine reduction. May bring reductant to CaiA. In Salmonella paratyphi B (strain ATCC BAA-1250 / SPB7), this protein is Protein FixA.